The primary structure comprises 512 residues: Plastidal glycolate/glycerate translocator 1, chloroplastic (512 aa).

The N-terminal 76 residues, 1–76 (MATLLATPIF…MNFERKLSVQ (76 aa)), are a transit peptide targeting the chloroplast. N-acetylalanine is present on A77. Helical transmembrane passes span 93 to 113 (VIAISHLLVSLGIILAADYFL), 127 to 147 (ALFGMFCIFSVLMIFDSVVPA), 160 to 180 (FLFIQRWLPLFYVPSLVVLPL), 195 to 215 (YIVAGGWLASLCVAGYTAIAV), 238 to 258 (LELWSWSGIFVVSFVGALFYP), 270 to 290 (PFLLSSTVLGYIVGSGLPSSI), 293 to 313 (VFHPIICCALSAVLAALAFGY), 336 to 356 (AGDILMGFLGSVILSFAFSMF), 367 to 387 (AEIFTSVIVSTVFSLYSTALV), 398 to 418 (TVSILPRCITVALALSIVSLF), 425 to 445 (LTAAVVVVTGLIGANFVQVVL), and 480 to 500 (LPFCAIAYALTGIFGSLLCSV).

This sequence belongs to the CidB/LrgB family. Expressed in leaves, stems and flowers, but not in roots.

It is found in the plastid. The protein resides in the chloroplast membrane. Functionally, glycolate/glycerate transporter required for photorespiration. The polypeptide is Plastidal glycolate/glycerate translocator 1, chloroplastic (PLGG1) (Arabidopsis thaliana (Mouse-ear cress)).